The sequence spans 476 residues: RNA-binding protein 45 (476 aa).

Positions Met1–Leu20 are disordered. RRM domains are found at residues Ser26 to Ser106 and Thr121 to Lys195. Lys34 is covalently cross-linked (Glycyl lysine isopeptide (Lys-Gly) (interchain with G-Cter in SUMO2)). Phosphoserine occurs at positions 199 and 464. One can recognise an RRM 3 domain in the interval Glu392–Ser464.

It is found in the cytoplasm. The protein resides in the nucleus. RNA-binding protein with binding specificity for poly(C). May play an important role in neural development. The protein is RNA-binding protein 45 (RBM45) of Homo sapiens (Human).